A 118-amino-acid chain; its full sequence is MARIAGINIPEHKHTVIALTAIFGVGSTRAQSICEAAGVAETTKIKDLDEAQIDKLRDEVAKFTVEGDLRREVSMSIKRLMDLGCFRGIRHRRSLPLRGQRTKTNARTRKGPRKAIKK.

Positions Ser94 to Lys118 are disordered.

This sequence belongs to the universal ribosomal protein uS13 family. As to quaternary structure, part of the 30S ribosomal subunit. Forms a loose heterodimer with protein S19. Forms two bridges to the 50S subunit in the 70S ribosome.

Located at the top of the head of the 30S subunit, it contacts several helices of the 16S rRNA. In the 70S ribosome it contacts the 23S rRNA (bridge B1a) and protein L5 of the 50S subunit (bridge B1b), connecting the 2 subunits; these bridges are implicated in subunit movement. Contacts the tRNAs in the A and P-sites. The protein is Small ribosomal subunit protein uS13 of Pseudoalteromonas atlantica (strain T6c / ATCC BAA-1087).